Consider the following 527-residue polypeptide: Peptide chain release factor 3 (527 aa).

Residues 9-277 (AKRRTFAIIS…AVVDWAPKPL (269 aa)) form the tr-type G domain. GTP-binding positions include 18–25 (SHPDAGKT), 86–90 (DTPGH), and 140–143 (NKLD).

It belongs to the TRAFAC class translation factor GTPase superfamily. Classic translation factor GTPase family. PrfC subfamily.

The protein resides in the cytoplasm. In terms of biological role, increases the formation of ribosomal termination complexes and stimulates activities of RF-1 and RF-2. It binds guanine nucleotides and has strong preference for UGA stop codons. It may interact directly with the ribosome. The stimulation of RF-1 and RF-2 is significantly reduced by GTP and GDP, but not by GMP. This Stutzerimonas stutzeri (strain A1501) (Pseudomonas stutzeri) protein is Peptide chain release factor 3.